The sequence spans 487 residues: Putative beta-glucosidase 35 (487 aa).

Positions 1-27 (MGIRMGRRLLLITLLLGALLCNNVAYA) are cleaved as a signal peptide. Q48 serves as a coordination point for a beta-D-glucoside. N-linked (GlcNAc...) asparagine glycosylation is found at N76 and N116. A beta-D-glucoside contacts are provided by residues H151 and 200–201 (NE). The active-site Proton donor is the E201. An intrachain disulfide couples C220 to C228. A beta-D-glucoside is bound at residue Y344. N369 carries an N-linked (GlcNAc...) asparagine glycan. Residue E414 coordinates a beta-D-glucoside. Catalysis depends on E414, which acts as the Nucleophile. 2 N-linked (GlcNAc...) asparagine glycosylation sites follow: N418 and N419. F458 lines the a beta-D-glucoside pocket.

It belongs to the glycosyl hydrolase 1 family.

The catalysed reaction is Hydrolysis of terminal, non-reducing beta-D-glucosyl residues with release of beta-D-glucose.. The protein is Putative beta-glucosidase 35 (BGLU35) of Oryza sativa subsp. japonica (Rice).